The primary structure comprises 70 residues: Alpha-toxin Bot9 (70 aa).

The LCN-type CS-alpha/beta domain occupies 6–69 (RDGYIVYPNN…PIKDPSYKCY (64 aa)). Cystine bridges form between Cys16–Cys68, Cys20–Cys40, Cys26–Cys50, and Cys30–Cys52.

This sequence belongs to the long (4 C-C) scorpion toxin superfamily. Sodium channel inhibitor family. Alpha subfamily. In terms of tissue distribution, expressed by the venom gland.

Its subcellular location is the secreted. In terms of biological role, alpha toxins bind voltage-independently at site-3 of sodium channels (Nav) and inhibit the inactivation of the activated channels, thereby blocking neuronal transmission. This toxin is active against rat Nav1.2/SCN2A and B.germanica Nav1. This chain is Alpha-toxin Bot9, found in Buthus occitanus tunetanus (Common European scorpion).